Reading from the N-terminus, the 248-residue chain is 3-deoxy-manno-octulosonate cytidylyltransferase (248 aa).

This sequence belongs to the KdsB family.

The protein localises to the cytoplasm. The catalysed reaction is 3-deoxy-alpha-D-manno-oct-2-ulosonate + CTP = CMP-3-deoxy-beta-D-manno-octulosonate + diphosphate. It functions in the pathway nucleotide-sugar biosynthesis; CMP-3-deoxy-D-manno-octulosonate biosynthesis; CMP-3-deoxy-D-manno-octulosonate from 3-deoxy-D-manno-octulosonate and CTP: step 1/1. It participates in bacterial outer membrane biogenesis; lipopolysaccharide biosynthesis. Functionally, activates KDO (a required 8-carbon sugar) for incorporation into bacterial lipopolysaccharide in Gram-negative bacteria. The chain is 3-deoxy-manno-octulosonate cytidylyltransferase from Shigella flexneri.